The following is a 280-amino-acid chain: Protein phosphatase 1 regulatory subunit 3B-A (280 aa).

The PP1-binding motif motif lies at 58–61; the sequence is RVSF. In terms of domain architecture, CBM21 spans 121-229; the sequence is RNRLQADSVC…SNKSLNYKIA (109 aa).

As to quaternary structure, interacts with glycogen, PPP1CC catalytic subunit of PP1 and PYGL. Associates with glycogen particles. Forms complexes with debranching enzyme, glycogen phosphorylase, glycogen synthase and phosphorylase kinase which is necessary for its regulation of PP1 activity.

Functionally, acts as a glycogen-targeting subunit for phosphatase PP1. Facilitates interaction of the PP1 with enzymes of the glycogen metabolism and regulates its activity. Suppresses the rate at which PP1 dephosphorylates (inactivates) glycogen phosphorylase and enhances the rate at which it activates glycogen synthase and therefore limits glycogen breakdown. This Xenopus laevis (African clawed frog) protein is Protein phosphatase 1 regulatory subunit 3B-A (ppp1r3b-a).